The sequence spans 427 residues: 5-hydroxybenzimidazole synthase BzaB (427 aa).

This sequence belongs to the ThiC family. 5-hydroxybenzimidazole synthase subfamily. [4Fe-4S] cluster serves as cofactor.

It carries out the reaction 5-amino-1-(5-phospho-beta-D-ribosyl)imidazole + AH2 + S-adenosyl-L-methionine = 5-hydroxybenzimidazole + 5'-deoxyadenosine + formate + L-methionine + A + NH4(+) + phosphate + 2 H(+). Its pathway is cofactor biosynthesis; adenosylcobalamin biosynthesis. Functionally, together with BzaA, catalyzes the conversion of aminoimidazole ribotide (AIR) to 5-hydroxybenzimidazole (5-HBI) in a radical S-adenosyl-L-methionine (SAM)-dependent reaction. Is thus involved in the anaerobic biosynthesis of dimethylbenzimidazole (DMB), the lower axial ligand of vitamin B12 (cobalamin). Requires BzaA for catalytic activity, as BzaB alone displays no activity. This is 5-hydroxybenzimidazole synthase BzaB from Eubacterium limosum.